Here is a 235-residue protein sequence, read N- to C-terminus: MKKLSKRMAALSTKIEDRIYAPLEALSIIKENANAKFDETIEAHIRLGIDPKYTDQQLRTTVVLPHGTGQSIKIAVITSGENVSKAKAAGADLFGEEDLVESINKGNMEFDLLIATPDMMPKVAKLGRVLGPRGLMPNPKAGTVTNDIANAIKEFKAGKLEFRADKAGIVHVRFGKASFTKEALFDNLKTLQESIDKNKPSGAKGKYWKTFYVTSTMGPSVQLDINAVQDYQPEG.

Belongs to the universal ribosomal protein uL1 family. In terms of assembly, part of the 50S ribosomal subunit.

Binds directly to 23S rRNA. The L1 stalk is quite mobile in the ribosome, and is involved in E site tRNA release. Functionally, protein L1 is also a translational repressor protein, it controls the translation of the L11 operon by binding to its mRNA. The protein is Large ribosomal subunit protein uL1 of Prochlorococcus marinus (strain AS9601).